A 394-amino-acid polypeptide reads, in one-letter code: HORMA domain-containing protein 1 (394 aa).

The 203-residue stretch at His-24 to Val-226 folds into the HORMA domain. Residues Ile-253–Lys-282 are compositionally biased toward basic and acidic residues. The tract at residues Ile-253 to Ile-394 is disordered. A compositionally biased stretch (acidic residues) spans Glu-288–Glu-300. Composition is skewed to polar residues over residues Leu-310–Thr-324 and Lys-343–Lys-352. A compositionally biased stretch (basic and acidic residues) spans Gln-362–Asp-374. Residue Ser-376 is modified to Phosphoserine. The short motif at Lys-383–Lys-386 is the Nuclear localization signal element.

In terms of assembly, interacts with HORMAD2. Interacts with IHO1. In terms of processing, phosphorylated at Ser-377 in a SPO11-dependent manner. Testis-specific. Over-expressed in carcinomas.

It localises to the nucleus. The protein resides in the chromosome. In terms of biological role, plays a key role in meiotic progression. Regulates 3 different functions during meiosis: ensures that sufficient numbers of processed DNA double-strand breaks (DSBs) are available for successful homology search by increasing the steady-state numbers of single-stranded DSB ends. Promotes synaptonemal-complex formation independently of its role in homology search. Plays a key role in the male mid-pachytene checkpoint and the female meiotic prophase checkpoint: required for efficient build-up of ATR activity on unsynapsed chromosome regions, a process believed to form the basis of meiotic silencing of unsynapsed chromatin (MSUC) and meiotic prophase quality control in both sexes. The polypeptide is HORMA domain-containing protein 1 (Homo sapiens (Human)).